The sequence spans 176 residues: MSTDVSTLIDRYVRDIPDYPQPGVVFKDITPLLSHPTALRTAIDALAEPLLGSEIDLVAGLEARGFIFAAPVAVRLGAGFVPLRKAGKLPAETLAESYDLEYGTATVEMHADAVPPGSRVLIVDDVLATGGTGRAAVDLIRRAGGTVVGLSVLLELGFLKGREKLADVELRALATV.

The protein belongs to the purine/pyrimidine phosphoribosyltransferase family. As to quaternary structure, homodimer.

The protein resides in the cytoplasm. It carries out the reaction AMP + diphosphate = 5-phospho-alpha-D-ribose 1-diphosphate + adenine. The protein operates within purine metabolism; AMP biosynthesis via salvage pathway; AMP from adenine: step 1/1. Functionally, catalyzes a salvage reaction resulting in the formation of AMP, that is energically less costly than de novo synthesis. The polypeptide is Adenine phosphoribosyltransferase (Thermobifida fusca (strain YX)).